The following is a 199-amino-acid chain: ATP-dependent Clp protease proteolytic subunit (199 aa).

Catalysis depends on Ser-97, which acts as the Nucleophile. The active site involves His-122.

The protein belongs to the peptidase S14 family. As to quaternary structure, fourteen ClpP subunits assemble into 2 heptameric rings which stack back to back to give a disk-like structure with a central cavity, resembling the structure of eukaryotic proteasomes.

It localises to the cytoplasm. The catalysed reaction is Hydrolysis of proteins to small peptides in the presence of ATP and magnesium. alpha-casein is the usual test substrate. In the absence of ATP, only oligopeptides shorter than five residues are hydrolyzed (such as succinyl-Leu-Tyr-|-NHMec, and Leu-Tyr-Leu-|-Tyr-Trp, in which cleavage of the -Tyr-|-Leu- and -Tyr-|-Trp bonds also occurs).. Cleaves peptides in various proteins in a process that requires ATP hydrolysis. Has a chymotrypsin-like activity. Plays a major role in the degradation of misfolded proteins. The protein is ATP-dependent Clp protease proteolytic subunit of Geotalea uraniireducens (strain Rf4) (Geobacter uraniireducens).